The sequence spans 509 residues: Aspartic proteinase oryzasin-1 (509 aa).

The N-terminal stretch at 1 to 24 (MGTRSVALVLLAAVLLQALLPASA) is a signal peptide. A propeptide spans 25–67 (AEGLVRIALKKRPIDENSRVAARLSGEEGARRLGLRGANSLGG) (activation peptide). The region spanning 85 to 506 (YFGEIGVGTP…DYGKMRVGFA (422 aa)) is the Peptidase A1 domain. Aspartate 103 is an active-site residue. Cysteine 116 and cysteine 122 are oxidised to a cystine. The N-linked (GlcNAc...) asparagine glycan is linked to asparagine 252. A disulfide bridge connects residues cysteine 281 and cysteine 285. Aspartate 290 is a catalytic residue. The Saposin B-type domain occupies 315–420 (VVSQECKTVV…NQLCDKLPSP (106 aa)). 4 disulfide bridges follow: cysteine 320-cysteine 414, cysteine 345-cysteine 386, cysteine 351-cysteine 383, and cysteine 428-cysteine 465. Asparagine 400 carries N-linked (GlcNAc...) asparagine glycosylation.

It belongs to the peptidase A1 family.

The protein resides in the vacuole. Its function is as follows. Involved in the breakdown of propeptides of storage proteins in protein-storage vacuoles. The protein is Aspartic proteinase oryzasin-1 of Oryza sativa subsp. japonica (Rice).